An 873-amino-acid polypeptide reads, in one-letter code: Sine oculis-binding protein homolog (873 aa).

Residues 1–14 (MAEMEKEGRPPENK) show a composition bias toward basic and acidic residues. Residues 1–26 (MAEMEKEGRPPENKRSRKPAHPVKRE) form a disordered region. 2 FCS-type zinc fingers span residues 142-180 (DDVS…KCFA) and 216-256 (FKNN…KCLN). 5 disordered regions span residues 307–338 (ARRK…SDTA), 413–485 (RGPP…GAPL), 550–608 (KPPS…NQAQ), 742–766 (STEG…ELAV), and 779–811 (SNCH…NPAD). Over residues 312–338 (PSPASAAGQIQGPGPSASTTASPSDTA) the composition is skewed to low complexity. Positions 460 to 485 (IHPPTTPTMPGNPPGLLPPPPPGAPL) are enriched in pro residues. Polar residues predominate over residues 554-570 (GFSSNGENFIPSNSSET). Residues 571-603 (PGGKPPNSSSSPRESKQGSSKPSDSSPSCSGQS) show a composition bias toward low complexity. A compositionally biased stretch (basic and acidic residues) spans 783–793 (LEGDTGKKAGE).

This sequence belongs to the SOBP family.

Functionally, implicated in development of the cochlea. In Gallus gallus (Chicken), this protein is Sine oculis-binding protein homolog.